The chain runs to 942 residues: UvrABC system protein A (942 aa).

32-39 (GLSGSGKS) serves as a coordination point for ATP. The C4-type zinc finger occupies 251–278 (CPVCGFTVPELEPRLFSFNAPFGSCPTC). 2 ABC transporter domains span residues 308–589 (WNPI…KKSI) and 609–937 (GNGR…HYLK). An ATP-binding site is contributed by 641-648 (GVSGSGKS). The C4-type zinc finger occupies 740–766 (CEACSGDGIIKIEMHFLPDVYVPCEVC).

It belongs to the ABC transporter superfamily. UvrA family. In terms of assembly, forms a heterotetramer with UvrB during the search for lesions.

The protein resides in the cytoplasm. Its function is as follows. The UvrABC repair system catalyzes the recognition and processing of DNA lesions. UvrA is an ATPase and a DNA-binding protein. A damage recognition complex composed of 2 UvrA and 2 UvrB subunits scans DNA for abnormalities. When the presence of a lesion has been verified by UvrB, the UvrA molecules dissociate. The polypeptide is UvrABC system protein A (Streptococcus pyogenes serotype M3 (strain ATCC BAA-595 / MGAS315)).